A 158-amino-acid polypeptide reads, in one-letter code: Inorganic pyrophosphatase (158 aa).

E8 lines the Mg(2+) pocket. Residues K16, R30, and Y42 each contribute to the substrate site. Positions 52, 57, 84, and 89 each coordinate Mg(2+). The Proton acceptor role is filled by D89. Residue Y125 participates in substrate binding.

It belongs to the PPase family. In terms of assembly, homohexamer. Requires Mg(2+) as cofactor.

The protein localises to the cytoplasm. The catalysed reaction is diphosphate + H2O = 2 phosphate + H(+). Its function is as follows. Catalyzes the hydrolysis of inorganic pyrophosphate (PPi) forming two phosphate ions. This Corynebacterium glutamicum (strain ATCC 13032 / DSM 20300 / JCM 1318 / BCRC 11384 / CCUG 27702 / LMG 3730 / NBRC 12168 / NCIMB 10025 / NRRL B-2784 / 534) protein is Inorganic pyrophosphatase.